Consider the following 126-residue polypeptide: Aspartate 1-decarboxylase (126 aa).

The active-site Schiff-base intermediate with substrate; via pyruvic acid is Ser25. The residue at position 25 (Ser25) is a Pyruvic acid (Ser). Residue Thr57 coordinates substrate. The active-site Proton donor is the Tyr58. Residue 73–75 participates in substrate binding; it reads GGA.

This sequence belongs to the PanD family. In terms of assembly, heterooctamer of four alpha and four beta subunits. Pyruvate is required as a cofactor. In terms of processing, is synthesized initially as an inactive proenzyme, which is activated by self-cleavage at a specific serine bond to produce a beta-subunit with a hydroxyl group at its C-terminus and an alpha-subunit with a pyruvoyl group at its N-terminus.

The protein resides in the cytoplasm. The enzyme catalyses L-aspartate + H(+) = beta-alanine + CO2. Its pathway is cofactor biosynthesis; (R)-pantothenate biosynthesis; beta-alanine from L-aspartate: step 1/1. Functionally, catalyzes the pyruvoyl-dependent decarboxylation of aspartate to produce beta-alanine. The protein is Aspartate 1-decarboxylase of Stenotrophomonas maltophilia (strain K279a).